The chain runs to 2878 residues: Trinucleotide repeat-containing gene 18 protein (2878 aa).

Disordered stretches follow at residues Met-1 to Ala-54 and Thr-102 to Leu-194. The span at Thr-119–His-128 shows a compositional bias: polar residues. Composition is skewed to basic and acidic residues over residues Ser-137 to Arg-149, Gly-158 to Ser-169, and Gln-179 to Leu-194. Ser-199 is subject to Phosphoserine. Disordered stretches follow at residues Ala-259 to Tyr-289, Phe-313 to Pro-442, Met-487 to Gly-507, Ser-540 to Cys-655, Ala-865 to Thr-1002, Ala-1033 to Pro-1104, Leu-1127 to Ser-1146, Leu-1171 to Leu-1228, Glu-1429 to Ser-1535, Leu-1613 to Glu-1668, Val-1694 to Lys-1718, and Glu-1737 to Ala-1787. Residues Ser-264–Ser-283 are compositionally biased toward pro residues. 2 stretches are compositionally biased toward basic and acidic residues: residues Arg-327 to Gly-337 and Arg-350 to Ser-362. Residues Pro-376–Ala-390 are compositionally biased toward low complexity. Residues Glu-396 to Pro-411 are compositionally biased toward basic and acidic residues. The residue at position 540 (Ser-540) is a Phosphoserine. Residue Lys-549 forms a Glycyl lysine isopeptide (Lys-Gly) (interchain with G-Cter in SUMO2) linkage. Basic and acidic residues-rich tracts occupy residues Leu-580–Ser-589 and Ala-865–Leu-881. Residues Ser-958–Pro-969 are compositionally biased toward pro residues. Basic and acidic residues predominate over residues Thr-972–Thr-993. Residues Ser-1053 and Ser-1062 each carry the phosphoserine modification. The span at Glu-1068 to Val-1088 shows a compositional bias: basic and acidic residues. Positions Leu-1410–Arg-1442 form a coiled coil. Basic and acidic residues predominate over residues Glu-1429–Arg-1448. A compositionally biased stretch (basic residues) spans Ser-1449–His-1463. Residue Ser-1469 is modified to Phosphoserine. A compositionally biased stretch (low complexity) spans Ser-1478 to Ser-1492. A compositionally biased stretch (acidic residues) spans Ser-1745 to Gly-1775. Phosphoserine occurs at positions 1789 and 1795. Positions Glu-1825–Gln-1835 are enriched in basic and acidic residues. Disordered stretches follow at residues Glu-1825–Ser-2040, Phe-2052–Pro-2080, and Leu-2226–Ser-2681. Residues Ala-1876–Pro-1890 show a composition bias toward low complexity. Composition is skewed to basic and acidic residues over residues Asp-1891–Gly-1900, Leu-1925–Leu-1936, Pro-1966–Asp-1978, and Arg-2024–Gly-2034. At Thr-2077 the chain carries Phosphothreonine. Basic and acidic residues predominate over residues Thr-2238–Glu-2247. Residues Ala-2261–Thr-2270 are compositionally biased toward basic residues. 2 stretches are compositionally biased toward basic and acidic residues: residues Ser-2307 to Ala-2316 and Ala-2409 to Pro-2419. Low complexity-rich tracts occupy residues Glu-2460 to Pro-2470, Thr-2491 to Glu-2520, and Arg-2540 to Thr-2578. Residues Thr-2579–Ala-2591 show a composition bias toward acidic residues. Residues Thr-2631–Pro-2641 are compositionally biased toward pro residues. At Ser-2681 the chain carries Phosphoserine. In terms of domain architecture, BAH spans Glu-2727–Asp-2872.

The chain is Trinucleotide repeat-containing gene 18 protein (Tnrc18) from Mus musculus (Mouse).